The chain runs to 95 residues: Small ribosomal subunit protein uS19 (95 aa).

This sequence belongs to the universal ribosomal protein uS19 family.

Protein S19 forms a complex with S13 that binds strongly to the 16S ribosomal RNA. In Chloroflexus aggregans (strain MD-66 / DSM 9485), this protein is Small ribosomal subunit protein uS19.